Here is a 158-residue protein sequence, read N- to C-terminus: MANEKQYPMTKEGKEKLEQELEYLKTVKRKEVVERIKIARGFGDLSENSEYDAAKDEQAFVESRIQMLENMIRNAVIIEEDKENPDVVSLGKSVTFIELPDGEEETYTIVGSAEADPFEGKISNDSPIAKSLLGRRVGDEVTVQTPGGEMLVKIVAVK.

A coiled-coil region spans residues 10-75 (TKEGKEKLEQ…QMLENMIRNA (66 aa)).

Belongs to the GreA/GreB family.

Necessary for efficient RNA polymerase transcription elongation past template-encoded arresting sites. The arresting sites in DNA have the property of trapping a certain fraction of elongating RNA polymerases that pass through, resulting in locked ternary complexes. Cleavage of the nascent transcript by cleavage factors such as GreA or GreB allows the resumption of elongation from the new 3'terminus. GreA releases sequences of 2 to 3 nucleotides. The sequence is that of Transcription elongation factor GreA from Geobacillus kaustophilus (strain HTA426).